Here is a 121-residue protein sequence, read N- to C-terminus: Basic phospholipase A2 F17 (121 aa).

Cystine bridges form between Cys-25-Cys-114, Cys-27-Cys-43, Cys-42-Cys-94, Cys-48-Cys-121, Cys-49-Cys-87, Cys-56-Cys-80, and Cys-74-Cys-85. Ca(2+) is bound by residues Tyr-26, Gly-28, and Gly-30. His-46 is an active-site residue. Asp-47 serves as a coordination point for Ca(2+). Asp-88 is a catalytic residue.

It belongs to the phospholipase A2 family. Group II subfamily. D49 sub-subfamily. As to quaternary structure, when this protein is associated with crotapotin (F5 or F7), it forms the crotoxin protein. Ca(2+) is required as a cofactor. In terms of tissue distribution, expressed by the venom gland.

It is found in the secreted. The enzyme catalyses a 1,2-diacyl-sn-glycero-3-phosphocholine + H2O = a 1-acyl-sn-glycero-3-phosphocholine + a fatty acid + H(+). Its activity is regulated as follows. Activated by heparin. Inhibited by its chaperone crotapotin. Snake venom phospholipase A2 (PLA2) that has anticoagulant activity and inhibits bactericial growth of the Gram-negative bacteria Xanthomonas axonopodis pv. passiflorae (in monomeric form). PLA2 catalyzes the calcium-dependent hydrolysis of the 2-acyl groups in 3-sn-phosphoglycerides. The chain is Basic phospholipase A2 F17 from Crotalus durissus terrificus (South American rattlesnake).